The chain runs to 1266 residues: Kinesin-like protein KIN-12G (1266 aa).

Residues 1–22 (MPSDCGDDDHGGGSAPAGFELQ) are disordered. Residues 32 to 369 (NVQVVIRVRP…LKFAQRAKYI (338 aa)) form the Kinesin motor domain. 113–120 (GQTGSGKT) serves as a coordination point for ATP. 4 coiled-coil regions span residues 613-668 (MEFI…SEAV), 817-854 (RSEL…FKRK), 1029-1060 (ARES…AERV), and 1084-1120 (SELL…MNRH).

Belongs to the TRAFAC class myosin-kinesin ATPase superfamily. Kinesin family. KIN-12 subfamily.

In Oryza sativa subsp. japonica (Rice), this protein is Kinesin-like protein KIN-12G.